Here is a 392-residue protein sequence, read N- to C-terminus: Xylose operon regulatory protein (392 aa).

Residues 288–386 (IQAMHYIRNH…DTTPKEYRDV (99 aa)) enclose the HTH araC/xylS-type domain. 2 consecutive DNA-binding regions (H-T-H motif) follow at residues 305–326 (DQVL…KEEV) and 353–376 (INEI…KKAY).

Regulatory protein for the xylBAFGHR operon. This is Xylose operon regulatory protein (xylR) from Escherichia coli O157:H7.